A 443-amino-acid chain; its full sequence is Probable D-serine dehydratase (443 aa).

The residue at position 116 (K116) is an N6-(pyridoxal phosphate)lysine.

This sequence belongs to the serine/threonine dehydratase family. DsdA subfamily. The cofactor is pyridoxal 5'-phosphate.

The catalysed reaction is D-serine = pyruvate + NH4(+). This chain is Probable D-serine dehydratase, found in Bacillus cereus (strain AH187).